A 245-amino-acid chain; its full sequence is Membrane-associated progesterone-binding protein 4 (245 aa).

Residues 6–26 (RFLLSPFVGVTFIVVLVSLYF) form a helical membrane-spanning segment. Residues 39 to 138 (KRLFSAEELA…RTYTPVGKLV (100 aa)) form the Cytochrome b5 heme-binding domain. The tract at residues 45-138 (EELALYNGTD…RTYTPVGKLV (94 aa)) is steroid-binding.

The protein belongs to the cytochrome b5 family. MAPR subfamily.

Its subcellular location is the membrane. The sequence is that of Membrane-associated progesterone-binding protein 4 from Arabidopsis thaliana (Mouse-ear cress).